Here is a 146-residue protein sequence, read N- to C-terminus: uncharacterized protein (146 aa).

The chain crosses the membrane as a helical span at residues 7–27 (FVLSITIVLVILIIIAFIWYN).

The protein belongs to the asfivirus E146L family.

It localises to the host membrane. It is found in the virion. This is an uncharacterized protein from Ornithodoros (relapsing fever ticks).